A 497-amino-acid polypeptide reads, in one-letter code: MTKHIIVIGGGLGGISAAIRMAQSGYSVSLYEQNNHIGGKVNRHESDGFGFDLGPSILTMPYIFEKLFEYSKKQMSDYVTIKRLPHQWRSFFPDGTTIDLYEGIKETGQHNAILSKQDIEELQNYLNYTRRIDRITEKGYFNYGLDTLSQIIKFHGPLNALINYDYVHTMQQAIDKRISNPYLRQMLGYFIKYVGSSSYDAPAVLSMLFHMQQEQGLWYVEGGIHHLANALEKLAREEGVTIHTGARVDNIKTYQRRVTGVRLDTGEFVKADYIISNMEVIPTYKYLIHLDTQRLNKLEREFEPASSGYVMHLGVACQYPQLAHHNFFFTENAYLNYQQVFHEKVLPDDPTIYLVNTNKTDHTQAPVGYENIKVLPHIPYIQDQPFTTEDYAKFRDKILDKLEKMGLTDLRKHIIYEDVWTPEDIEKNYRSNRGAIYGFVADKKKNKGFKFPKESQYFENLYFVGGSVNPGGGIPMVTLSGQQVADKINAREAKNRK.

7–19 (VIGGGLGGISAAI) serves as a coordination point for FAD.

This sequence belongs to the carotenoid/retinoid oxidoreductase family. CrtP subfamily. FAD serves as cofactor.

The enzyme catalyses all-trans-4,4'-diaponeurosporene + 2 AH2 + 2 O2 = 4,4'-diaponeurosporenal + 2 A + 3 H2O. It participates in carotenoid biosynthesis; staphyloxanthin biosynthesis; staphyloxanthin from farnesyl diphosphate: step 3/5. Its function is as follows. Involved in the biosynthesis of the yellow-orange carotenoid staphyloxanthin, which plays a role in the virulence via its protective function against oxidative stress. Catalyzes the oxidation of the terminal methyl side group of 4,4'-diaponeurosporene to form 4,4'-diaponeurosporen-4-al. This chain is 4,4'-diaponeurosporene oxygenase, found in Staphylococcus aureus (strain MW2).